Here is a 335-residue protein sequence, read N- to C-terminus: Beta-ketoacyl-[acyl-carrier-protein] synthase III (335 aa).

Active-site residues include cysteine 116 and histidine 256. Residues glutamine 257 to arginine 261 form an ACP-binding region. Asparagine 286 is a catalytic residue.

The protein belongs to the thiolase-like superfamily. FabH family. Homodimer.

It is found in the cytoplasm. It carries out the reaction malonyl-[ACP] + acetyl-CoA + H(+) = 3-oxobutanoyl-[ACP] + CO2 + CoA. It functions in the pathway lipid metabolism; fatty acid biosynthesis. In terms of biological role, catalyzes the condensation reaction of fatty acid synthesis by the addition to an acyl acceptor of two carbons from malonyl-ACP. Catalyzes the first condensation reaction which initiates fatty acid synthesis and may therefore play a role in governing the total rate of fatty acid production. Possesses both acetoacetyl-ACP synthase and acetyl transacylase activities. Its substrate specificity determines the biosynthesis of branched-chain and/or straight-chain of fatty acids. In Porphyromonas gingivalis (strain ATCC BAA-308 / W83), this protein is Beta-ketoacyl-[acyl-carrier-protein] synthase III.